Here is a 718-residue protein sequence, read N- to C-terminus: Polyribonucleotide nucleotidyltransferase (718 aa).

2 residues coordinate Mg(2+): aspartate 497 and aspartate 503. A KH domain is found at 564–623; that stretch reads PRLLTMRIDPDMIGLVIGPGGKTVKSITEQTKTKIDIDDDGTVTISASEAEQAERAKQLI. The S1 motif domain occupies 633–701; that stretch reads GEVYVGRVTR…NKGRLNLTRL (69 aa).

This sequence belongs to the polyribonucleotide nucleotidyltransferase family. It depends on Mg(2+) as a cofactor.

Its subcellular location is the cytoplasm. It catalyses the reaction RNA(n+1) + phosphate = RNA(n) + a ribonucleoside 5'-diphosphate. Its function is as follows. Involved in mRNA degradation. Catalyzes the phosphorolysis of single-stranded polyribonucleotides processively in the 3'- to 5'-direction. The polypeptide is Polyribonucleotide nucleotidyltransferase (Gloeothece citriformis (strain PCC 7424) (Cyanothece sp. (strain PCC 7424))).